We begin with the raw amino-acid sequence, 348 residues long: Phenylalanine--tRNA ligase alpha subunit (348 aa).

E268 contacts Mg(2+).

This sequence belongs to the class-II aminoacyl-tRNA synthetase family. Phe-tRNA synthetase alpha subunit type 1 subfamily. In terms of assembly, tetramer of two alpha and two beta subunits. The cofactor is Mg(2+).

The protein resides in the cytoplasm. It carries out the reaction tRNA(Phe) + L-phenylalanine + ATP = L-phenylalanyl-tRNA(Phe) + AMP + diphosphate + H(+). The protein is Phenylalanine--tRNA ligase alpha subunit of Bordetella bronchiseptica (strain ATCC BAA-588 / NCTC 13252 / RB50) (Alcaligenes bronchisepticus).